A 335-amino-acid polypeptide reads, in one-letter code: MTVPQVGINGFGRIGRLVLRAAIEKDTMSVVAINDPFIDLEYMAYMFKFDSTHGRYAGSVETKDGKLIVNGKSITIYGHRDPAEIPWAEAGADYVVESTGVFTLKEKAEKHFTGGAKKVIISAPSKDAPMFVCGVNEDKYTPDLNVISNASCTTNCLAPLVKVIHEKYGIEEGLMTTVHATTATQKTVDGPSQKDWRGGRGAGANIIPSSTGAAKAVGKVLPELNGKLTGMAFRVPTSDVSVVDLTVRLATETSYDDIKATMKAAAEDSMKGILKYTEEAVVSTDFIHEEASCVFDAGAGIMLNSRFCKLVAWYDNEWGYSNRVVDLIAHVAKLQ.

NAD(+) is bound by residues 13-14 (RI), Asp35, and Arg80. D-glyceraldehyde 3-phosphate-binding positions include 151–153 (SCT), Thr182, 211–212 (TG), and Arg234. Cys152 serves as the catalytic Nucleophile. Asn316 is a binding site for NAD(+).

It belongs to the glyceraldehyde-3-phosphate dehydrogenase family. As to quaternary structure, homotetramer.

It localises to the cytoplasm. It carries out the reaction D-glyceraldehyde 3-phosphate + phosphate + NAD(+) = (2R)-3-phospho-glyceroyl phosphate + NADH + H(+). It participates in carbohydrate degradation; glycolysis; pyruvate from D-glyceraldehyde 3-phosphate: step 1/5. This is Glyceraldehyde-3-phosphate dehydrogenase, cytosolic (GAPC) from Gracilaria gracilis (Red alga).